The sequence spans 442 residues: 3-phosphoshikimate 1-carboxyvinyltransferase (442 aa).

3-phosphoshikimate-binding residues include Lys-27, Ser-28, and Arg-32. A phosphoenolpyruvate-binding site is contributed by Lys-27. Residues Gly-100 and Arg-128 each coordinate phosphoenolpyruvate. Residues Ser-174, Ser-175, Gln-176, Ser-204, Asp-321, and Lys-348 each coordinate 3-phosphoshikimate. Gln-176 is a phosphoenolpyruvate binding site. Asp-321 (proton acceptor) is an active-site residue. Phosphoenolpyruvate-binding residues include Arg-352, Arg-394, and Lys-424.

The protein belongs to the EPSP synthase family. In terms of assembly, monomer.

The protein localises to the cytoplasm. The catalysed reaction is 3-phosphoshikimate + phosphoenolpyruvate = 5-O-(1-carboxyvinyl)-3-phosphoshikimate + phosphate. Its pathway is metabolic intermediate biosynthesis; chorismate biosynthesis; chorismate from D-erythrose 4-phosphate and phosphoenolpyruvate: step 6/7. Its function is as follows. Catalyzes the transfer of the enolpyruvyl moiety of phosphoenolpyruvate (PEP) to the 5-hydroxyl of shikimate-3-phosphate (S3P) to produce enolpyruvyl shikimate-3-phosphate and inorganic phosphate. The chain is 3-phosphoshikimate 1-carboxyvinyltransferase from Herminiimonas arsenicoxydans.